Reading from the N-terminus, the 109-residue chain is Ribonuclease P protein component 4 (109 aa).

Zn(2+) is bound by residues Cys-65, Cys-68, Cys-94, and Cys-97.

Belongs to the eukaryotic/archaeal RNase P protein component 4 family. Consists of a catalytic RNA component and at least 4-5 protein subunits. Requires Zn(2+) as cofactor.

It is found in the cytoplasm. The enzyme catalyses Endonucleolytic cleavage of RNA, removing 5'-extranucleotides from tRNA precursor.. Functionally, part of ribonuclease P, a protein complex that generates mature tRNA molecules by cleaving their 5'-ends. This Methanococcus vannielii (strain ATCC 35089 / DSM 1224 / JCM 13029 / OCM 148 / SB) protein is Ribonuclease P protein component 4.